A 519-amino-acid chain; its full sequence is MNVETKHTRTMGDIFVQHSQKLELLKTVLRNVAELDALEGLNMIDAVQRLGIDYNFQREIDEILHKQMSIVSARDDLHEVALRFRLLRQHGYFVPEDVFNNFKDSKGTFKQVLGEDIKGLMSLYEASQLGTEGEDILVEAEKFSGHLLKTSLSHLDHHRVRIVANTLRNPHHKSLAPFMARNFFVTSQATNSWLNLLKEVAKTDFNMVRSLHQNEIVQMSKWWKELGLAKELKFARDQPLKWYIWSMACLTDPKLSEERVELTKPISFVYLIDDIFDVYGTLDDLILFTEAVNRWEITAIDHLPDYMKICFKALYDMTNEFSSKVYLKHGWNPLQSLKISWASLCNAFLVEAKWFASGKLPKSEEYLKNGIVSSGVNVVLVHMFFLLGQNITRKSVELLNETPAIISSSAAILRLWDDLGSAKDENQDGNDGSYVRCYLEEHEGCSIEEAREKTINMISDEWKKLNRELLSPNPFPASFTLASLNLARMIPLMYSYDGNQCLPSLKEYMKLMLYETVSM.

Positions 273, 277, 417, 421, and 425 each coordinate Mg(2+). Residues 273–277 (DDIFD) carry the DDXXD motif motif.

The protein belongs to the terpene synthase family. Tpsg subfamily. The cofactor is Mg(2+). It depends on Mn(2+) as a cofactor. Expressed in receptacle tissue. Not detected in leaves or green fruit.

The protein localises to the cytoplasm. It is found in the cytosol. The catalysed reaction is (2E,6E)-farnesyl diphosphate + H2O = (3S,6E)-nerolidol + diphosphate. It participates in secondary metabolite biosynthesis; terpenoid biosynthesis. Involved in monoterpene (C10) and sesquiterpene (C15) biosynthesis. Converts geranyl diphosphate (GPP) into S-linalool and farnesyl diphosphate (FPP) into (3S)-E-nerolidol. Exclusively present and highly expressed in the fruit of cultivated (octaploid) varieties. This chain is (3S,6E)-nerolidol synthase 1, found in Fragaria ananassa (Strawberry).